The chain runs to 313 residues: Pyrimidine-specific ribonucleoside hydrolase RihB (313 aa).

The active-site Proton acceptor is the D11. D11, D16, and V124 together coordinate Ca(2+). Q227 and H239 together coordinate substrate. D240 is a binding site for Ca(2+).

Belongs to the IUNH family. RihB subfamily. Homotetramer. Ca(2+) serves as cofactor.

It carries out the reaction a pyrimidine ribonucleoside + H2O = a pyrimidine nucleobase + D-ribose. In terms of biological role, hydrolyzes cytidine or uridine to ribose and cytosine or uracil, respectively. Has a clear preference for cytidine over uridine. Strictly specific for ribonucleosides. This is Pyrimidine-specific ribonucleoside hydrolase RihB from Shigella sonnei (strain Ss046).